A 348-amino-acid chain; its full sequence is Nicotinate-nucleotide--dimethylbenzimidazole phosphoribosyltransferase (348 aa).

Residue E316 is the Proton acceptor of the active site.

The protein belongs to the CobT family.

The enzyme catalyses 5,6-dimethylbenzimidazole + nicotinate beta-D-ribonucleotide = alpha-ribazole 5'-phosphate + nicotinate + H(+). Its pathway is nucleoside biosynthesis; alpha-ribazole biosynthesis; alpha-ribazole from 5,6-dimethylbenzimidazole: step 1/2. Catalyzes the synthesis of alpha-ribazole-5'-phosphate from nicotinate mononucleotide (NAMN) and 5,6-dimethylbenzimidazole (DMB). In Xanthomonas campestris pv. campestris (strain 8004), this protein is Nicotinate-nucleotide--dimethylbenzimidazole phosphoribosyltransferase.